The chain runs to 588 residues: Glutathione/L-cysteine transport system ATP-binding/permease protein CydD (588 aa).

At 1 to 15 (MNKSRQKELTRWLKQ) the chain is on the cytoplasmic side. 2 helical membrane passes run 16-36 (QSVISQRWLNISRLLGFVSGI) and 37-57 (LIIAQAWFMARILQHMIMENI). In terms of domain architecture, ABC transmembrane type-1 spans 20-306 (SQRWLNISRL…APEFFQPLRD (287 aa)). Residues 58 to 136 (PREALLLPFT…LEQIDDMHDY (79 aa)) lie on the Cytoplasmic side of the membrane. Residues 137-157 (YARYLPQMALAVSVPLLIVVA) form a helical membrane-spanning segment. Residues 158 to 161 (IFPS) are Periplasmic-facing. The chain crosses the membrane as a helical span at residues 162–182 (NWAAALILLGTAPLIPLFMAL). Topologically, residues 183-249 (VGMGAADANR…MEVLRLAFLS (67 aa)) are cytoplasmic. Residues 250–270 (SGILEFFTSLSIALVAVYFGF) form a helical membrane-spanning segment. Residues 271–276 (SYLGEL) lie on the Periplasmic side of the membrane. The chain crosses the membrane as a helical span at residues 277–297 (DFGHYDTGVTLAAGFLALILA). Topologically, residues 298-573 (PEFFQPLRDL…QGRYAELSVA (276 aa)) are cytoplasmic. Residues 339 to 572 (EAELASTDPV…EQGRYAELSV (234 aa)) form the ABC transporter domain. 373 to 380 (LPAGQRAV) is an ATP binding site.

Belongs to the ABC transporter superfamily. Cysteine exporter (TC 3.A.1.129.1) family. As to quaternary structure, forms a heterodimer with CydC.

It localises to the cell inner membrane. The catalysed reaction is L-cysteine(in) + ATP + H2O = L-cysteine(out) + ADP + phosphate + H(+). The enzyme catalyses glutathione(in) + ATP + H2O = glutathione(out) + ADP + phosphate + H(+). Its activity is regulated as follows. ATPase activity is stimulated by various thiol compounds. The presence of heme leads to a further enhancement of thiol-stimulated ATPase activity, although a large excess of heme inhibits activity. Glutathione transport is inhibited by sodium orthovanadate, an inhibitor of ABC-type transport systems, but not by the proton ionophore carbonyl cyanide m-chlorophenylhydrazone (CCCP). Its function is as follows. Part of the ABC transporter complex CydDC that exports the reduced low-molecular-weight thiols cysteine and glutathione to the periplasm. Export of these thiol-containing redox-active molecules may be crucial for redox homeostasis in the periplasm, permitting correct assembly of various respiratory complexes and formation of correct disulfide bonds in periplasmic and secreted proteins. CydD contains transmembrane domains (TMD), which form a pore in the inner membrane, and an ATP-binding domain (NBD), which is responsible for energy generation. Required for the assembly of functional cytochrome bd-type quinol oxidases and periplasmic c-type cytochromes. Overexpression of CydDC under anaerobic conditions also results in the formation of a heme biosynthesis-derived pigment, P-574. CydDC binds heme b, but heme is probably not transported by the complex and instead has a role in regulating ATPase activity. In terms of biological role, conversely, a more recent study suggests an alternative function of CydDC: authors suggest that CydDC does not mediate the export of L-cysteine but rather reduces cytoplasmic L-cystine to L-cysteine. The principle function of CydDC would be to maintain the reduced state of cytoplasmic L-cysteine, thereby providing an important connection between sulfur metabolism, oxidative stress and resistance to antibiotics. This Escherichia coli (strain K12) protein is Glutathione/L-cysteine transport system ATP-binding/permease protein CydD.